The following is a 430-amino-acid chain: Type II methyltransferase M.Sau96I (430 aa).

The HTH cro/C1-type domain occupies 9–63; the sequence is IEKMKNQNIKTQTELAEKIDISKSQLSFMFSDEYEPLKKNVIKLADVLKVSPNDI. An SAM-dependent MTase C5-type domain is found at 99–429; the sequence is YNVFETFAGA…KSLVHYLNQF (331 aa). Residue Cys-174 is part of the active site.

This sequence belongs to the class I-like SAM-binding methyltransferase superfamily. C5-methyltransferase family.

The catalysed reaction is a 2'-deoxycytidine in DNA + S-adenosyl-L-methionine = a 5-methyl-2'-deoxycytidine in DNA + S-adenosyl-L-homocysteine + H(+). A methylase that recognizes the double-stranded sequence 5'-GGNCC-3', methylates C-4 on both strands, and protects the DNA from cleavage by the Sau96I endonuclease. The protein is Type II methyltransferase M.Sau96I of Staphylococcus aureus.